A 107-amino-acid chain; its full sequence is FK506-binding protein 1 (107 aa).

Positions 19–107 (GSNVTVHHAG…VFEVELITFK (89 aa)) constitute a PPIase FKBP-type domain.

Belongs to the FKBP-type PPIase family.

It carries out the reaction [protein]-peptidylproline (omega=180) = [protein]-peptidylproline (omega=0). Inhibited by both FK506 and rapamycin. PPIases accelerate the folding of proteins by catalyzing the cis-trans isomerization of proline imidic peptide bonds in oligopeptides. The chain is FK506-binding protein 1 (fkbp1) from Dictyostelium discoideum (Social amoeba).